The chain runs to 568 residues: MEVIKHEGPGRLGVVRLGDYSFRTPALVGIDFTLSPFNSFFHPKEPGEYDFNLAPSIPLGFYTPDEVIQKAIGRLWSVNYDGFNAFYLPALRRTEYLEEFFKIIDRHNFDAVYLGNSKILIKEYRYFVRILRELRERFPNVMIIADLEPFFYPLAVYLGIDAFDTRSLKLYDFEGKGFTQFSPFLWSNEPNSLDFAREVILLVRKALEEGKLRYLVENFFPTQYNAGILRIADLEHPDYLEKYTPIQKETVYFISDASIRRPEVKRWHERVLERFTPPKNVELLLLFPCSAKKPYSFSRSHTLYRRAVKEALGSGTSKVHELILTSPFGVVPREWEWLAKYDIVVTGHWSEEEIKPAAELLAKTLEKYPEDIPIVAHLDEAYVEIAKLASELSGREIIFTDVKNGTTSHESLRSLTETLREFQIEGTKEDRTYRYFENIRKVFDFYFGVGAGEAILPENGQVKGSKMLRIFVEGQQTGTFTDGVISVTPYGMQRIYDALKSYWVKIDFELRGDVFAVGVEEADPRIRPDDIVGIVRDEKVVGVGKAVLSGEEMVRAKKGVAVKVRKRV.

In terms of domain architecture, PUA spans 496–565 (YDALKSYWVK…AKKGVAVKVR (70 aa)).

Belongs to the archaeosine synthase type 1 family. Forms a robust complex with the archaeosine synthase beta subunit RaSEA, likely an alpha(2)beta(2) heterotetrameric structure. Formation of this complex highly increases lysine transfer activity.

The catalysed reaction is 7-cyano-7-carbaguanosine(15) in tRNA + L-lysine = 7-N-[(5S)-5-amino-5-carboxypentyl]formamidino-7-deazaguanosine(15) in tRNA. It functions in the pathway tRNA modification; archaeosine-tRNA biosynthesis. Functionally, functions in the biosynthesis of archaeosine, a modified nucleoside present in the dihydrouridine loop (D-loop) of archaeal tRNAs. Catalyzes the addition of L-lysine to the cyano group of 7-cyano-7-deazaguanine (preQ0)-modified tRNAs at position 15, to generate q0kN15-tRNA, a q0N lysine adduct identified as 7-N-[(5S)-5-amino-5-carboxypentyl]formamidino-7-deazaguanosine. This Thermococcus kodakarensis (strain ATCC BAA-918 / JCM 12380 / KOD1) (Pyrococcus kodakaraensis (strain KOD1)) protein is Archaeosine synthase subunit alpha.